The chain runs to 501 residues: Type II secretion system protein E (501 aa).

262 to 269 provides a ligand contact to ATP; the sequence is GPTGSGKS. The Zn(2+) site is built by Cys-395, Cys-398, Cys-428, and Cys-431.

It belongs to the GSP E family. Forms homooligomers; most probably hexamers. Interacts with ExeL/GspL. It depends on Zn(2+) as a cofactor.

Its subcellular location is the cell inner membrane. It catalyses the reaction ATP + H2O + cellular proteinSide 1 = ADP + phosphate + cellular proteinSide 2.. Functionally, ATPase component of the type II secretion system required for the energy-dependent secretion of extracellular factors such as proteases and toxins from the periplasm. Acts as a molecular motor to provide the energy that is required for assembly of the pseudopilus and the extrusion of substrates generated in the cytoplasm. This is Type II secretion system protein E (exeE) from Aeromonas hydrophila.